The sequence spans 264 residues: Thymidylate synthase (264 aa).

Residue Arg-21 coordinates dUMP. His-51 contacts (6R)-5,10-methylene-5,6,7,8-tetrahydrofolate. 126 to 127 (RR) provides a ligand contact to dUMP. Residue Cys-146 is the Nucleophile of the active site. DUMP is bound by residues 166-169 (RSAD), Asn-177, and 207-209 (HLY). Asp-169 provides a ligand contact to (6R)-5,10-methylene-5,6,7,8-tetrahydrofolate. Residue Ala-263 coordinates (6R)-5,10-methylene-5,6,7,8-tetrahydrofolate.

The protein belongs to the thymidylate synthase family. Bacterial-type ThyA subfamily. Homodimer.

The protein resides in the cytoplasm. It carries out the reaction dUMP + (6R)-5,10-methylene-5,6,7,8-tetrahydrofolate = 7,8-dihydrofolate + dTMP. It functions in the pathway pyrimidine metabolism; dTTP biosynthesis. Catalyzes the reductive methylation of 2'-deoxyuridine-5'-monophosphate (dUMP) to 2'-deoxythymidine-5'-monophosphate (dTMP) while utilizing 5,10-methylenetetrahydrofolate (mTHF) as the methyl donor and reductant in the reaction, yielding dihydrofolate (DHF) as a by-product. This enzymatic reaction provides an intracellular de novo source of dTMP, an essential precursor for DNA biosynthesis. In Bartonella tribocorum (strain CIP 105476 / IBS 506), this protein is Thymidylate synthase.